The primary structure comprises 528 residues: G protein-coupled receptor 161 (528 aa).

Residues 1 to 30 (MSLNSSLGHRKELSNLTEGASDQGGSGVTE) are Extracellular-facing. 2 N-linked (GlcNAc...) asparagine glycosylation sites follow: asparagine 4 and asparagine 15. A helical transmembrane segment spans residues 31–51 (FVAIVIITVFVCLGNLVIVIT). Residues 52-64 (LYRKSYLLTLSNK) are Cytoplasmic-facing. A helical transmembrane segment spans residues 65–85 (FVFSLTLSNFLLSVLVLPFVV). Topologically, residues 86 to 101 (TSSIRREWIFGVVWCN) are extracellular. The cysteines at positions 100 and 178 are disulfide-linked. N-linked (GlcNAc...) asparagine glycosylation is present at asparagine 101. A helical transmembrane segment spans residues 102-122 (FSALLYLLISSASMLTLGIIA). Over 123-143 (VDRYYAVLYPMAYPMKITGNR) the chain is Cytoplasmic. A helical transmembrane segment spans residues 144 to 164 (AVMVLAYIWLHSLIGCLPPLF). The Extracellular segment spans residues 165–190 (GWSSVEFDEFKWMCVAAWHREPGYTA). A helical membrane pass occupies residues 191–211 (FWQIWCALLPFLVMLVCYGFI). Over 212–269 (FRVARVKARKVHCGAVVTVEVGVQRTGRKNSSTSTSSSGSRKSAFQGVVYSANQCKAL) the chain is Cytoplasmic. Residues 270 to 290 (VTILVVIGAFMVTWGPYMVVI) form a helical membrane-spanning segment. The Extracellular segment spans residues 291–306 (TSEALWGKNCVSPTLE). Residues 307 to 327 (TWATWLSFTSAICHPLIYGLW) traverse the membrane as a helical segment. The Cytoplasmic portion of the chain corresponds to 328–528 (NKTVRKELLG…EGDVLATEQR (201 aa)).

The protein belongs to the G-protein coupled receptor 1 family.

The protein localises to the cell projection. The protein resides in the cilium membrane. It is found in the cell membrane. Functionally, key negative regulator of Shh signaling, which promotes the processing of GLI3 into GLI3R during neural tube development. Recruited by TULP3 and the IFT-A complex to primary cilia and acts as a regulator of the PKA-dependent basal repression machinery in Shh signaling by increasing cAMP levels, leading to promote the PKA-dependent processing of GLI3 into GLI3R and repress the Shh signaling. In presence of SHH, it is removed from primary cilia and is internalized into recycling endosomes, preventing its activity and allowing activation of the Shh signaling. Its ligand is unknown. This chain is G protein-coupled receptor 161 (GPR161), found in Bos taurus (Bovine).